Here is a 608-residue protein sequence, read N- to C-terminus: Glutamine--fructose-6-phosphate aminotransferase [isomerizing] (608 aa).

The active-site Nucleophile; for GATase activity is Cys2. In terms of domain architecture, Glutamine amidotransferase type-2 spans 2 to 217 (CGIVGILGRG…DGDWAVLTRA (216 aa)). SIS domains lie at 284–423 (LPFD…ERGK) and 456–598 (LARY…VDQP). The active-site For Fru-6P isomerization activity is Lys603.

It localises to the cytoplasm. The catalysed reaction is D-fructose 6-phosphate + L-glutamine = D-glucosamine 6-phosphate + L-glutamate. Functionally, involved in the production of the root hair deformation (HAD) factor specifically on soybean. The protein is Glutamine--fructose-6-phosphate aminotransferase [isomerizing] (nodM) of Bradyrhizobium diazoefficiens (strain JCM 10833 / BCRC 13528 / IAM 13628 / NBRC 14792 / USDA 110).